A 120-amino-acid polypeptide reads, in one-letter code: Large ribosomal subunit protein bL17 (120 aa).

It belongs to the bacterial ribosomal protein bL17 family. Part of the 50S ribosomal subunit. Contacts protein L32.

The sequence is that of Large ribosomal subunit protein bL17 from Desulforapulum autotrophicum (strain ATCC 43914 / DSM 3382 / VKM B-1955 / HRM2) (Desulfobacterium autotrophicum).